The following is a 428-amino-acid chain: Aspartic protease 10 (428 aa).

The signal sequence occupies residues 1–16 (MKTFIALLALLTVVSA). In terms of domain architecture, Peptidase A1 spans 72–425 (YMVQISLGSP…DMKSGRLGLA (354 aa)). The active site involves Asp90. N-linked (GlcNAc...) asparagine glycans are attached at residues Asn155 and Asn191. Asp318 is a catalytic residue. A disulfide bond links Cys353 and Cys385.

Belongs to the peptidase A1 family. Proteolytically cleaved. In terms of tissue distribution, synthesized in the intestine. When secreted in low heme conditions, localizes to neurons near the anterior and posterior regions of the body and in coelomocytes.

It is found in the secreted. In terms of biological role, aspartic protease which plays a role in heme homeostasis and mediates inter-organ signaling between the intestine and extra-intestinal tissues when cellular heme levels are low. This chain is Aspartic protease 10, found in Caenorhabditis elegans.